The primary structure comprises 347 residues: Phosphoribosylformylglycinamidine cyclo-ligase (347 aa).

Belongs to the AIR synthase family.

Its subcellular location is the cytoplasm. It catalyses the reaction 2-formamido-N(1)-(5-O-phospho-beta-D-ribosyl)acetamidine + ATP = 5-amino-1-(5-phospho-beta-D-ribosyl)imidazole + ADP + phosphate + H(+). It functions in the pathway purine metabolism; IMP biosynthesis via de novo pathway; 5-amino-1-(5-phospho-D-ribosyl)imidazole from N(2)-formyl-N(1)-(5-phospho-D-ribosyl)glycinamide: step 2/2. This chain is Phosphoribosylformylglycinamidine cyclo-ligase, found in Prochlorococcus marinus (strain MIT 9301).